Here is a 375-residue protein sequence, read N- to C-terminus: Actin, cytoplasmic (375 aa).

This sequence belongs to the actin family.

It is found in the cytoplasm. Its subcellular location is the cytoskeleton. It catalyses the reaction ATP + H2O = ADP + phosphate + H(+). Actins are highly conserved proteins that are involved in various types of cell motility and are ubiquitously expressed in all eukaryotic cells. The sequence is that of Actin, cytoplasmic (MIC-ACT-1) from Sterkiella nova (Ciliate).